A 367-amino-acid chain; its full sequence is Heme A synthase (367 aa).

5 consecutive transmembrane segments (helical) span residues 26-46 (IRGW…VGGA), 111-131 (LLAR…WLTG), 139-159 (LPLL…WWMV), 174-194 (LATH…IYRG), and 212-232 (AGII…VAGL). His274 contacts heme. 3 helical membrane passes run 276-296 (AGAY…LRAA), 305-325 (SVLL…TLLL), and 327-347 (VPIV…GFAI). His335 serves as a coordination point for heme.

The protein belongs to the COX15/CtaA family. Type 2 subfamily. Interacts with CtaB. Heme b is required as a cofactor.

Its subcellular location is the cell membrane. It catalyses the reaction Fe(II)-heme o + 2 A + H2O = Fe(II)-heme a + 2 AH2. The protein operates within porphyrin-containing compound metabolism; heme A biosynthesis; heme A from heme O: step 1/1. In terms of biological role, catalyzes the conversion of heme O to heme A by two successive hydroxylations of the methyl group at C8. The first hydroxylation forms heme I, the second hydroxylation results in an unstable dihydroxymethyl group, which spontaneously dehydrates, resulting in the formyl group of heme A. The protein is Heme A synthase of Sinorhizobium fredii (strain NBRC 101917 / NGR234).